Reading from the N-terminus, the 560-residue chain is MVLLKEPVQPLPRSSLLYNNASNSSSRIKETRKVKLLYNPLTKRQILNNFEILATLGNGQYGKVKLARDLGTGALVAIKILNRFEKRSGYSLQLKVENPRVNQEIEVMKRCHHENVVELYEILNDPESTKVYLVLEYCSRGPVKWCPENKMEIKAVGPSILTFQQSRKVVLDVVSGLEYLHSQGITHRDIKPSNLLISSNGTVKISDFGVAMSTATGSTNIQSSHEQLLKSRALGTPAFFAPELCSTEKEYSCSSAIDIWSLGVTIYCLLFGKLPFNANSGLELFDSIINKPLEFPSYEEMLNGATSGITMEEYTDAKDLLKKLLQKDPDKRIKLADIKVHPFMCHYGKSDAASVLTNLETFHELKVSPPSSCKRVELVSLPVNSSFASLDSVYMENFDHNNLRTGADRNSTYSPSIYDANTLSPSAYHNIGSRESSYSSFSSFTSSTAFASQISIQDAPAIGDQQCLIGESGSSLRVNSCEFPQYTTMSPVGEYPFESTEASLSSTLTPVGNVPQRIKAHLVEGKSNSKDDLRIEADASLVFEASDAQRTRRRMSLYKL.

The 295-residue stretch at 50–344 (FEILATLGNG…LADIKVHPFM (295 aa)) folds into the Protein kinase domain. Residues 56–64 (LGNGQYGKV) and Lys-79 each bind ATP. Catalysis depends on Asp-189, which acts as the Proton acceptor.

This sequence belongs to the protein kinase superfamily. Ser/Thr protein kinase family. In terms of processing, autophosphorylated.

It catalyses the reaction L-seryl-[protein] + ATP = O-phospho-L-seryl-[protein] + ADP + H(+). It carries out the reaction L-threonyl-[protein] + ATP = O-phospho-L-threonyl-[protein] + ADP + H(+). One of the three SNF1 protein kinases (with SAK1 and ELM1) which are required for growth on nonfermentable carbon sources and nonpreferred sugars and for response to environmental stress. Activates SNF1 by phosphorylation of its activation-loop 'Thr-210'. Required for the regulation by SNF1 of the transcription of a large set of genes, the modification the activity of metabolic enzymes, and the control of various nutrient-responsive cellular developmental processes. Also phosphorylates GAL83, MIG1 and SIP2. In Saccharomyces cerevisiae (strain ATCC 204508 / S288c) (Baker's yeast), this protein is Serine/threonine-protein kinase TOS3 (TOS3).